We begin with the raw amino-acid sequence, 607 residues long: Isocitrate dehydrogenase kinase/phosphatase (607 aa).

ATP-binding positions include 328–334 (APGIKGL) and K349. D384 is an active-site residue.

The protein belongs to the AceK family.

The protein resides in the cytoplasm. It catalyses the reaction L-seryl-[isocitrate dehydrogenase] + ATP = O-phospho-L-seryl-[isocitrate dehydrogenase] + ADP + H(+). Functionally, bifunctional enzyme which can phosphorylate or dephosphorylate isocitrate dehydrogenase (IDH) on a specific serine residue. This is a regulatory mechanism which enables bacteria to bypass the Krebs cycle via the glyoxylate shunt in response to the source of carbon. When bacteria are grown on glucose, IDH is fully active and unphosphorylated, but when grown on acetate or ethanol, the activity of IDH declines drastically concomitant with its phosphorylation. The chain is Isocitrate dehydrogenase kinase/phosphatase from Cupriavidus metallidurans (strain ATCC 43123 / DSM 2839 / NBRC 102507 / CH34) (Ralstonia metallidurans).